The chain runs to 178 residues: Ribosome maturation factor RimM (178 aa).

The 78-residue stretch at 101-178 folds into the PRC barrel domain; it reads DGEYYWYQLQ…EMQVDWDADF (78 aa).

This sequence belongs to the RimM family. Binds ribosomal protein uS19.

The protein resides in the cytoplasm. Its function is as follows. An accessory protein needed during the final step in the assembly of 30S ribosomal subunit, possibly for assembly of the head region. Essential for efficient processing of 16S rRNA. May be needed both before and after RbfA during the maturation of 16S rRNA. It has affinity for free ribosomal 30S subunits but not for 70S ribosomes. The protein is Ribosome maturation factor RimM of Stutzerimonas stutzeri (strain A1501) (Pseudomonas stutzeri).